Consider the following 254-residue polypeptide: 5-oxoprolinase subunit A (254 aa).

The protein belongs to the LamB/PxpA family. As to quaternary structure, forms a complex composed of PxpA, PxpB and PxpC.

The catalysed reaction is 5-oxo-L-proline + ATP + 2 H2O = L-glutamate + ADP + phosphate + H(+). Its function is as follows. Catalyzes the cleavage of 5-oxoproline to form L-glutamate coupled to the hydrolysis of ATP to ADP and inorganic phosphate. In Carboxydothermus hydrogenoformans (strain ATCC BAA-161 / DSM 6008 / Z-2901), this protein is 5-oxoprolinase subunit A.